Here is a 191-residue protein sequence, read N- to C-terminus: MIRISDAAQAHFAKLLANQKEGTQIRVFVINPGTPNAECGVSYCPPDAVEATDTALKFDLLTAYVDELSAPYLEDAEIDFVTDQLGSQLTLKAPNAKMRKVADDAPLMERVEYALQSQINPQLAGHGGRVSLMEITDEGYAILQFGGGCNGCSMVDVTLKEGIEKQLLNEFPELKGVRDLTEHQRGEHSYY.

The [4Fe-4S] cluster site is built by C149 and C152.

The protein belongs to the NfuA family. Homodimer. Requires [4Fe-4S] cluster as cofactor.

Functionally, involved in iron-sulfur cluster biogenesis. Binds a 4Fe-4S cluster, can transfer this cluster to apoproteins, and thereby intervenes in the maturation of Fe/S proteins. Could also act as a scaffold/chaperone for damaged Fe/S proteins. This is Fe/S biogenesis protein NfuA from Salmonella typhi.